A 315-amino-acid chain; its full sequence is Transaldolase (315 aa).

The active-site Schiff-base intermediate with substrate is Lys125.

This sequence belongs to the transaldolase family. Type 1 subfamily. As to quaternary structure, homodimer.

It is found in the cytoplasm. It carries out the reaction D-sedoheptulose 7-phosphate + D-glyceraldehyde 3-phosphate = D-erythrose 4-phosphate + beta-D-fructose 6-phosphate. Its pathway is carbohydrate degradation; pentose phosphate pathway; D-glyceraldehyde 3-phosphate and beta-D-fructose 6-phosphate from D-ribose 5-phosphate and D-xylulose 5-phosphate (non-oxidative stage): step 2/3. Transaldolase is important for the balance of metabolites in the pentose-phosphate pathway. This Leptothrix cholodnii (strain ATCC 51168 / LMG 8142 / SP-6) (Leptothrix discophora (strain SP-6)) protein is Transaldolase.